We begin with the raw amino-acid sequence, 148 residues long: Large ribosomal subunit protein uL15 (148 aa).

Residues 1–57 form a disordered region; sequence MRLHDLYPFPEERKTRKRVGRGSGSGLGCTSGKGNKGQNARAGGGVRPGFEGGQMPL. 2 stretches are compositionally biased toward gly residues: residues 21–35 and 42–52; these read RGSGSGLGCTSGKGN and AGGGVRPGFEG.

This sequence belongs to the universal ribosomal protein uL15 family. Part of the 50S ribosomal subunit.

Binds to the 23S rRNA. This is Large ribosomal subunit protein uL15 from Nitratidesulfovibrio vulgaris (strain ATCC 29579 / DSM 644 / CCUG 34227 / NCIMB 8303 / VKM B-1760 / Hildenborough) (Desulfovibrio vulgaris).